Here is a 341-residue protein sequence, read N- to C-terminus: Short chain dehydrogenase FGM9 (341 aa).

NADP(+) contacts are provided by Leu-38, Lys-63, Asp-88, and Asn-114. Catalysis depends on proton donor residues Ser-167 and Tyr-200. NADP(+) contacts are provided by Tyr-200 and Lys-204. The active-site Lowers pKa of active site Tyr is Lys-204.

The protein belongs to the short-chain dehydrogenases/reductases (SDR) family.

It functions in the pathway secondary metabolite biosynthesis. Functionally, short chain dehydrogenase; part of the Fg3_54/C64 gene cluster that mediates the biosynthesis of the octapeptide fusaoctaxin A, a virulence factor that is required for cell-to-cell invasiveness of plant host. The 2 nonribosomal peptide synthetases NRPS9 and NRPS5 form an assembly line which likely utilizes GABA as a starter unit (loaded on the unique module M1 of NRPS9) and sequentially incorporates seven extender units composed of the residues L-Ala, L-allo-Ile, L-Ser, L-Val, L-Ser, L-Leu and L-Leu, respectively. During the process, each of the residues that are tethered on modules M3-M7 of NRPS5 containing an E domain can undergo an epimerization reaction to produce a D-configuration before the transpeptidation reaction occurs. The elongation of the peptidyl chain might be terminated by module M8-mediated L-Leu incorporation, followed by R domain-catalyzed 4 electron reduction to release the resulting octapeptide from the assembly line as an alcohol. Fusaoctaxin A is cleaved by the cluster specific ABC transporter FGM5 to the pentapeptide fusapentaxin A and the tripeptide fusatrixin A. The other enzymes from the cluster, FGM1, FGM2, FGM3 and FGM9 seem not to be involved in the biosynthesis of fusaoctaxin A and their functions have still to be determined. In Gibberella zeae (strain ATCC MYA-4620 / CBS 123657 / FGSC 9075 / NRRL 31084 / PH-1) (Wheat head blight fungus), this protein is Short chain dehydrogenase FGM9.